A 262-amino-acid polypeptide reads, in one-letter code: Sperm microtubule inner protein 6 (262 aa).

This sequence belongs to the SPMIP6 family. In terms of assembly, microtubule inner protein component of sperm flagellar doublet microtubules. Interacts with alpha-tubulin. In terms of tissue distribution, expressed in testis. Strongly expressed in ciliated epithelial cells with lower levels in goblet cells (at protein level).

The protein localises to the cytoplasm. It localises to the cytoskeleton. The protein resides in the nucleus. It is found in the mitochondrion. Its subcellular location is the flagellum axoneme. Functionally, may participate in intramanchette transport and midpiece formation of the sperm tail. May play a potential role in somatic cell proliferation. The chain is Sperm microtubule inner protein 6 from Homo sapiens (Human).